The following is a 296-amino-acid chain: Outer surface protein B (296 aa).

Positions 1 to 15 (MRLLIGFALALALIG) are cleaved as a signal peptide. Residue Cys-16 is the site of N-palmitoyl cysteine attachment. Cys-16 is lipidated: S-diacylglycerol cysteine. Residues 25 to 51 (GSQKENDLNLEDSSKKSHQNAKQDLPA) form a disordered region. Positions 28–39 (KENDLNLEDSSK) are enriched in basic and acidic residues.

The protein localises to the cell outer membrane. The chain is Outer surface protein B (ospB) from Borreliella burgdorferi (strain ATCC 35210 / DSM 4680 / CIP 102532 / B31) (Borrelia burgdorferi).